The following is a 382-amino-acid chain: RIB43A-like with coiled-coils protein 2 (382 aa).

Positions 222-255 form a coiled coil; the sequence is NKSQAIESVERKKQEKKQEQEDNLAEITNLLRGD.

Belongs to the RIB43A family. In terms of assembly, microtubule inner protein component of sperm flagellar doublet microtubules. Expressed in airway epithelial cells.

It localises to the cytoplasm. The protein resides in the cytoskeleton. Its subcellular location is the cilium axoneme. The protein localises to the flagellum axoneme. Functionally, microtubule inner protein (MIP) part of the dynein-decorated doublet microtubules (DMTs) in cilia axoneme, which is required for motile cilia beating. The protein is RIB43A-like with coiled-coils protein 2 of Homo sapiens (Human).